Consider the following 1393-residue polypeptide: RNA polymerase II-associated protein 1 (1393 aa).

Disordered stretches follow at residues 34–53 (KKGN…LQDH), 61–94 (NLPD…PEER), and 266–295 (SHTQ…EEPL). Positions 64–74 (DLPPALVPSPP) are enriched in pro residues. Serine 72 carries the post-translational modification Phosphoserine. The residue at position 321 (threonine 321) is a Phosphothreonine. The tract at residues 496–531 (PSQEDKEDEDEDEECPAGKAKRKSPEEESRPPPDLA) is disordered. Residues 500–510 (DKEDEDEDEEC) show a composition bias toward acidic residues. Residues 518–531 (KSPEEESRPPPDLA) are compositionally biased toward basic and acidic residues. Serine 1121 is subject to Phosphoserine.

It belongs to the RPAP1 family. Part of an RNA polymerase II complex that contains POLR2A, POLR2B, POLR2C, POLR2D, POLR2E, POLR2F, POLR2G, POLR2H, POLR2I, POLR2J, POLR2K, POLR2L, RPAP1, FCP1 plus the general transcription factors TFIIB and TFIIF.

The protein resides in the nucleus. In terms of biological role, forms an interface between the RNA polymerase II enzyme and chaperone/scaffolding protein, suggesting that it is required to connect RNA polymerase II to regulators of protein complex formation. Required for interaction of the RNA polymerase II complex with acetylated histone H3. This is RNA polymerase II-associated protein 1 (RPAP1) from Homo sapiens (Human).